Reading from the N-terminus, the 129-residue chain is Small ribosomal subunit protein uS9 (129 aa).

The protein belongs to the universal ribosomal protein uS9 family.

The chain is Small ribosomal subunit protein uS9 from Helicobacter pylori (strain Shi470).